Consider the following 606-residue polypeptide: Kelch-like protein 41 (606 aa).

Position 3 is a phosphoserine (Ser3). The BTB domain maps to 33–100 (IDCTLKAGDK…LYSASIDLND (68 aa)). Positions 135–237 (CLAILRLGLL…AEKYFKDHVE (103 aa)) constitute a BACK domain. 5 Kelch repeats span residues 346 to 398 (QVYV…EVDD), 399 to 447 (KIYV…SHNG), 448 to 495 (MIYC…IHKG), 497 to 542 (IVIA…SLAG), and 544 to 599 (LYAI…TRLN).

Interacts with NRAP. Part of a complex that contains CUL3, RBX1 and KLHL41. Interacts with LASP1. In terms of processing, ubiquitinated by E3 ubiquitin ligase complex formed by CUL3 and RBX1 and probably targeted for proteasome-independent degradation. Quinone-induced oxidative stress increases its ubiquitination. Skeletal muscle. Localized between laterally fusing myofibrils in skeletal muscle (at protein level). Expressed at a lower level in the heart compared to skeletal muscle.

The protein localises to the cytoplasm. The protein resides in the cytoskeleton. It localises to the cell projection. It is found in the pseudopodium. Its subcellular location is the ruffle. The protein localises to the myofibril. The protein resides in the sarcomere. It localises to the m line. It is found in the sarcoplasmic reticulum membrane. Its subcellular location is the endoplasmic reticulum membrane. Its function is as follows. Involved in skeletal muscle development and differentiation. Regulates proliferation and differentiation of myoblasts and plays a role in myofibril assembly by promoting lateral fusion of adjacent thin fibrils into mature, wide myofibrils. Required for pseudopod elongation in transformed cells. The protein is Kelch-like protein 41 (Klhl41) of Mus musculus (Mouse).